The following is a 276-amino-acid chain: HTH-type transcriptional activator RhaR (276 aa).

Residues glutamate 174 to arginine 272 enclose the HTH araC/xylS-type domain. DNA-binding regions (H-T-H motif) lie at residues alanine 191–threonine 212 and valine 239–phenylalanine 262.

In terms of assembly, binds DNA as a dimer.

It is found in the cytoplasm. Its function is as follows. Activates expression of the rhaSR operon in response to L-rhamnose. This chain is HTH-type transcriptional activator RhaR, found in Mannheimia succiniciproducens (strain KCTC 0769BP / MBEL55E).